Consider the following 210-residue polypeptide: Large ribosomal subunit protein bL25 (210 aa).

A disordered region spans residues 175 to 210 (IATILPPQQEEEIDSGEQQEAGQPDAAEGRETTPEE). Basic and acidic residues predominate over residues 201–210 (AEGRETTPEE).

It belongs to the bacterial ribosomal protein bL25 family. CTC subfamily. Part of the 50S ribosomal subunit; part of the 5S rRNA/L5/L18/L25 subcomplex. Contacts the 5S rRNA. Binds to the 5S rRNA independently of L5 and L18.

In terms of biological role, this is one of the proteins that binds to the 5S RNA in the ribosome where it forms part of the central protuberance. The chain is Large ribosomal subunit protein bL25 from Geobacillus kaustophilus (strain HTA426).